A 317-amino-acid chain; its full sequence is Protein-methionine-sulfoxide reductase catalytic subunit MsrP (317 aa).

Residues 1 to 40 (MNKFTKTDVTPEKLFIQRRKIIQGMSVLSAAAAFPNLAAA) constitute a signal peptide (tat-type signal). Residues asparagine 72, 75–76 (YE), cysteine 129, threonine 164, asparagine 216, arginine 221, and 232–234 (SIK) contribute to the Mo-molybdopterin site.

This sequence belongs to the MsrP family. In terms of assembly, heterodimer of a catalytic subunit (MsrP) and a heme-binding subunit (MsrQ). It depends on Mo-molybdopterin as a cofactor. Predicted to be exported by the Tat system. The position of the signal peptide cleavage has not been experimentally proven.

It is found in the periplasm. It catalyses the reaction L-methionyl-[protein] + a quinone + H2O = L-methionyl-(S)-S-oxide-[protein] + a quinol. The catalysed reaction is L-methionyl-[protein] + a quinone + H2O = L-methionyl-(R)-S-oxide-[protein] + a quinol. Part of the MsrPQ system that repairs oxidized periplasmic proteins containing methionine sulfoxide residues (Met-O), using respiratory chain electrons. Thus protects these proteins from oxidative-stress damage caused by reactive species of oxygen and chlorine generated by the host defense mechanisms. MsrPQ is essential for the maintenance of envelope integrity under bleach stress, rescuing a wide series of structurally unrelated periplasmic proteins from methionine oxidation. The catalytic subunit MsrP is non-stereospecific, being able to reduce both (R-) and (S-) diastereoisomers of methionine sulfoxide. This chain is Protein-methionine-sulfoxide reductase catalytic subunit MsrP, found in Actinobacillus succinogenes (strain ATCC 55618 / DSM 22257 / CCUG 43843 / 130Z).